The following is a 209-amino-acid chain: Uracil phosphoribosyltransferase (209 aa).

5-phospho-alpha-D-ribose 1-diphosphate is bound by residues R79, R104, and D131–S139. Uracil contacts are provided by residues I194 and G199 to A201. Position 200 (D200) interacts with 5-phospho-alpha-D-ribose 1-diphosphate.

This sequence belongs to the UPRTase family. Mg(2+) is required as a cofactor.

The catalysed reaction is UMP + diphosphate = 5-phospho-alpha-D-ribose 1-diphosphate + uracil. Its pathway is pyrimidine metabolism; UMP biosynthesis via salvage pathway; UMP from uracil: step 1/1. Its activity is regulated as follows. Allosterically activated by GTP. In terms of biological role, catalyzes the conversion of uracil and 5-phospho-alpha-D-ribose 1-diphosphate (PRPP) to UMP and diphosphate. In Staphylococcus epidermidis (strain ATCC 35984 / DSM 28319 / BCRC 17069 / CCUG 31568 / BM 3577 / RP62A), this protein is Uracil phosphoribosyltransferase.